A 335-amino-acid chain; its full sequence is Phosphatidate cytidylyltransferase, mitochondrial (335 aa).

It belongs to the TAM41 family. Mg(2+) is required as a cofactor.

The protein resides in the mitochondrion inner membrane. It carries out the reaction a 1,2-diacyl-sn-glycero-3-phosphate + CTP + H(+) = a CDP-1,2-diacyl-sn-glycerol + diphosphate. It functions in the pathway phospholipid metabolism; CDP-diacylglycerol biosynthesis; CDP-diacylglycerol from sn-glycerol 3-phosphate: step 3/3. Functionally, catalyzes the conversion of phosphatidic acid (PA) to CDP-diacylglycerol (CDP-DAG), an essential intermediate in the synthesis of phosphatidylglycerol, cardiolipin and phosphatidylinositol. The sequence is that of Phosphatidate cytidylyltransferase, mitochondrial (TAMM41) from Bos taurus (Bovine).